Consider the following 158-residue polypeptide: Putative peptidoglycan-binding-like protein (158 aa).

The signal sequence occupies residues 1–24 (MRSPKVKFLTIFTFCIFITKMSFA).

It belongs to the IagB/IpgF/P19 family.

It localises to the periplasm. This chain is Putative peptidoglycan-binding-like protein (pbl), found in Escherichia coli (strain K12).